Reading from the N-terminus, the 173-residue chain is Mitochondrial holo-[acyl-carrier-protein] synthase (173 aa).

The protein belongs to the P-Pant transferase superfamily. AcpS family.

Its subcellular location is the mitochondrion. The catalysed reaction is apo-[ACP] + CoA = holo-[ACP] + adenosine 3',5'-bisphosphate + H(+). In terms of biological role, transfers the 4'-phosphopantetheine moiety from coenzyme A to a Ser of mitochondrial acyl-carrier-protein. The chain is Mitochondrial holo-[acyl-carrier-protein] synthase (PPT2) from Saccharomyces cerevisiae (strain ATCC 204508 / S288c) (Baker's yeast).